Reading from the N-terminus, the 950-residue chain is Oxysterol-binding protein-related protein 1 (950 aa).

The tract at residues 1-237 is interaction with RAB7A; that stretch reads MNTEAEQQLL…NKVVHKALKR (237 aa). 3 ANK repeats span residues 47–76, 80–109, and 175–204; these read LGWTPLHLACYFGHKQVVEDLLKAGAKVNM, MGDTPLHRAAFTGRKELVLLLLEYDADSTV, and LGNTPLHCAAYRAHKQCVLKLLRSGADPSL. Positions 235–334 constitute a PH domain; it reads LKRYEGPLWK…WLEAIEEHSA (100 aa). Residues 430–463 are a coiled coil; sequence NFKLEQEQEKNKILSEALETLATEHHELERSLVE. Positions 469 to 483 match the FFAT motif; it reads SILSEEEFYDALSGS. Serine 499 bears the Phosphoserine mark. Disordered regions lie at residues 502–530 and 795–821; these read ENEVPGSSGKHRMSEGKDCGGGDALSNGI and KKNTEEKKNSKQTSSSEESDEMPVPDS. Positions 879-913 form a coiled coil; sequence RAMENGEIDLASEEKKRLEEKQRAARKNRSKSEED.

It belongs to the OSBP family. In terms of assembly, interacts (via FFAT motif) with VAPA and VAPB. Interacts with the GTP-bound form of RAB7A. Interacts with OAS1B. Interacts (via FFAT motif) with MOSPD2 (via MSP domain). As to expression, ubiquitous.

It localises to the late endosome. Binds phospholipids; exhibits strong binding to phosphatidic acid and weak binding to phosphatidylinositol 3-phosphate. Stabilizes GTP-bound RAB7A on late endosomes/lysosomes and alters functional properties of late endocytic compartments via its interaction with RAB7A. Binds 25-hydroxycholesterol and cholesterol. The sequence is that of Oxysterol-binding protein-related protein 1 from Mus musculus (Mouse).